We begin with the raw amino-acid sequence, 440 residues long: 3-phosphoshikimate 1-carboxyvinyltransferase (440 aa).

Positions 19, 20, and 24 each coordinate 3-phosphoshikimate. Position 19 (K19) interacts with phosphoenolpyruvate. Residues G92 and R121 each contribute to the phosphoenolpyruvate site. S166, Q168, D315, and K342 together coordinate 3-phosphoshikimate. Q168 serves as a coordination point for phosphoenolpyruvate. Residue D315 is the Proton acceptor of the active site. 2 residues coordinate phosphoenolpyruvate: R346 and R399.

This sequence belongs to the EPSP synthase family. In terms of assembly, monomer.

The protein resides in the cytoplasm. The catalysed reaction is 3-phosphoshikimate + phosphoenolpyruvate = 5-O-(1-carboxyvinyl)-3-phosphoshikimate + phosphate. It participates in metabolic intermediate biosynthesis; chorismate biosynthesis; chorismate from D-erythrose 4-phosphate and phosphoenolpyruvate: step 6/7. In terms of biological role, catalyzes the transfer of the enolpyruvyl moiety of phosphoenolpyruvate (PEP) to the 5-hydroxyl of shikimate-3-phosphate (S3P) to produce enolpyruvyl shikimate-3-phosphate and inorganic phosphate. In Leptospira borgpetersenii serovar Hardjo-bovis (strain JB197), this protein is 3-phosphoshikimate 1-carboxyvinyltransferase.